Reading from the N-terminus, the 128-residue chain is Large-conductance mechanosensitive channel (128 aa).

The next 2 helical transmembrane spans lie at 10 to 30 (FAMR…GAFG) and 76 to 96 (GLFI…FMMV).

This sequence belongs to the MscL family. Homopentamer.

Its subcellular location is the cell inner membrane. Functionally, channel that opens in response to stretch forces in the membrane lipid bilayer. May participate in the regulation of osmotic pressure changes within the cell. This Mannheimia succiniciproducens (strain KCTC 0769BP / MBEL55E) protein is Large-conductance mechanosensitive channel.